A 288-amino-acid chain; its full sequence is AA9 family lytic polysaccharide monooxygenase A (288 aa).

An N-terminal signal peptide occupies residues 1-22 (MKSTSATKFSVLAAATFAAAHG). His-21 and His-104 together coordinate Cu(2+). 2 disulfides stabilise this stretch: Cys-74-Cys-191 and Cys-115-Cys-119. Residue Asn-151 is glycosylated (N-linked (GlcNAc...) asparagine). Residues His-177 and Gln-186 each contribute to the O2 site. A Cu(2+)-binding site is contributed by Tyr-188. The segment at 236-270 (PEPYKSGSGSSDNAAEAVSSAAAEEPAAAATSAAA) is disordered. Over residues 249–270 (AAEAVSSAAAEEPAAAATSAAA) the composition is skewed to low complexity.

It belongs to the polysaccharide monooxygenase AA9 family. It depends on Cu(2+) as a cofactor.

The protein localises to the secreted. The enzyme catalyses [(1-&gt;4)-beta-D-glucosyl]n+m + reduced acceptor + O2 = 4-dehydro-beta-D-glucosyl-[(1-&gt;4)-beta-D-glucosyl]n-1 + [(1-&gt;4)-beta-D-glucosyl]m + acceptor + H2O.. Its function is as follows. Lytic polysaccharide monooxygenase (LPMO) that depolymerizes crystalline and amorphous polysaccharides via the oxidation of scissile alpha- or beta-(1-4)-glycosidic bonds, yielding C1 and C4 oxidation products. Catalysis by LPMOs requires the reduction of the active-site copper from Cu(II) to Cu(I) by a reducing agent and H(2)O(2) or O(2) as a cosubstrate. Active on cellulose and on xyloglucan for deconstruction of plant biomass. The protein is AA9 family lytic polysaccharide monooxygenase A of Geotrichum candidum (Oospora lactis).